The following is a 1035-amino-acid chain: FACT complex subunit SPT16 (1035 aa).

Residues 432 to 500 (FLKKEDEEEE…AKRRLTEQKG (69 aa)) are a coiled coil. Disordered regions lie at residues 491 to 520 (AKRR…ASQV) and 920 to 1035 (EQGG…KRKK). The span at 499-519 (KGGQQTMKARKSNVSYKNASQ) shows a compositional bias: polar residues. Residues 929-985 (PDGEGSDAAEGDSESELDDETFNPSEDEEEEEEDSDEDYSDETEDSVDSEESADSEE) are compositionally biased toward acidic residues. Residues 986-1006 (ESGKDWDELEEEARKADRESL) are compositionally biased toward basic and acidic residues.

It belongs to the peptidase M24 family. SPT16 subfamily. Component of the FACT complex (also called the DUF complex), a stable heterodimer of ssrp1 and supt16h. May also be a component of a ck2-spt16-ssrp1 complex composed of ssrp1, supt16h, csnk2a1, csnk2a2 and csnk2b. The FACT complex may also interact with vcp.

The protein localises to the nucleus. Its subcellular location is the chromosome. Functionally, component of the FACT complex, a general chromatin factor that acts to reorganize nucleosomes. The FACT complex is involved in multiple processes that require DNA as a template such as mRNA elongation, DNA replication and DNA repair. During transcription elongation the FACT complex acts as a histone chaperone that both destabilizes and restores nucleosomal structure. It facilitates the passage of RNA polymerase II and transcription by promoting the dissociation of one histone H2A-H2B dimer from the nucleosome, then subsequently promotes the reestablishment of the nucleosome following the passage of RNA polymerase II. The chain is FACT complex subunit SPT16 (supt16h) from Xenopus laevis (African clawed frog).